Reading from the N-terminus, the 557-residue chain is Formate--tetrahydrofolate ligase (557 aa).

Residue 65-72 (TPAGEGKT) coordinates ATP.

This sequence belongs to the formate--tetrahydrofolate ligase family.

The enzyme catalyses (6S)-5,6,7,8-tetrahydrofolate + formate + ATP = (6R)-10-formyltetrahydrofolate + ADP + phosphate. The protein operates within one-carbon metabolism; tetrahydrofolate interconversion. In Methylorubrum extorquens (strain PA1) (Methylobacterium extorquens), this protein is Formate--tetrahydrofolate ligase.